The sequence spans 311 residues: Catechol 1,2-dioxygenase 1 (311 aa).

Fe cation contacts are provided by tyrosine 164, tyrosine 200, histidine 224, and histidine 226.

This sequence belongs to the intradiol ring-cleavage dioxygenase family. As to quaternary structure, homodimer. Fe(3+) is required as a cofactor.

The enzyme catalyses catechol + O2 = cis,cis-muconate + 2 H(+). It functions in the pathway aromatic compound metabolism; beta-ketoadipate pathway; 5-oxo-4,5-dihydro-2-furylacetate from catechol: step 1/3. In terms of biological role, can cleave 4-methyl-, 4-chloro-, and 3-methoxycatechol at lower rates than catechol, but has no activity with 4-nitrocatechol or protocatechuic acid. In Acinetobacter lwoffii, this protein is Catechol 1,2-dioxygenase 1 (catA1).